We begin with the raw amino-acid sequence, 743 residues long: Polyribonucleotide nucleotidyltransferase (743 aa).

2 residues coordinate Mg(2+): aspartate 489 and aspartate 495. One can recognise a KH domain in the interval 556–618 (PRIEKMHIGK…PCIDAAIGMI (63 aa)). The 71-residue stretch at 628 to 698 (GETYPGKITS…KTGKFKLSRK (71 aa)) folds into the S1 motif domain. Positions 704–743 (PEGYVEPQPRERRERREGGREGGRNFERRGGDRDHREPRG) are disordered.

The protein belongs to the polyribonucleotide nucleotidyltransferase family. Requires Mg(2+) as cofactor.

It localises to the cytoplasm. It catalyses the reaction RNA(n+1) + phosphate = RNA(n) + a ribonucleoside 5'-diphosphate. Involved in mRNA degradation. Catalyzes the phosphorolysis of single-stranded polyribonucleotides processively in the 3'- to 5'-direction. This chain is Polyribonucleotide nucleotidyltransferase, found in Porphyromonas gingivalis (strain ATCC 33277 / DSM 20709 / CIP 103683 / JCM 12257 / NCTC 11834 / 2561).